The primary structure comprises 196 residues: HTH-type transcriptional regulator Hpr (196 aa).

The 145-residue stretch at 13-157 (SIVFSHKMAL…LICIVRHIYG (145 aa)) folds into the HTH marR-type domain. The segment at residues 63-86 (ISDIASHGVMHVSTAFNFSKKLEA) is a DNA-binding region (H-T-H motif).

Homodimer.

Functionally, negative regulator of protease production and sporulation. The polypeptide is HTH-type transcriptional regulator Hpr (Shouchella clausii (strain KSM-K16) (Alkalihalobacillus clausii)).